Reading from the N-terminus, the 170-residue chain is Adenine phosphoribosyltransferase (170 aa).

The protein belongs to the purine/pyrimidine phosphoribosyltransferase family. As to quaternary structure, homodimer.

Its subcellular location is the cytoplasm. The enzyme catalyses AMP + diphosphate = 5-phospho-alpha-D-ribose 1-diphosphate + adenine. It functions in the pathway purine metabolism; AMP biosynthesis via salvage pathway; AMP from adenine: step 1/1. Its function is as follows. Catalyzes a salvage reaction resulting in the formation of AMP, that is energically less costly than de novo synthesis. The sequence is that of Adenine phosphoribosyltransferase from Lactococcus lactis subsp. cremoris (strain MG1363).